The sequence spans 174 residues: Pituitary tumor-transforming gene 1 protein-interacting protein (174 aa).

Positions 1–29 (MASAVLGLTLRWVMFLSAVLLLLLPGASA) are cleaved as a signal peptide. Over 30–93 (QEPPGVGCSE…RWGVCWVNFE (64 aa)) the chain is Extracellular. A PSI domain is found at 36-89 (GCSEYTNRSCEECLRNVSCLWCNENKACLDYPVRKILPPASLCKLSSARWGVCW). Residues N42 and N51 are each glycosylated (N-linked (GlcNAc...) asparagine). A helical membrane pass occupies residues 94–114 (ALIITMSVLGGSVLLGITVCC). At 115-174 (CCCCRRKRSRKPDKSDERAMREQEERRVRQEERRAEMKSRHDEIRKKYGLFKEQNPYEKF) the chain is on the cytoplasmic side. The interval 126–155 (PDKSDERAMREQEERRVRQEERRAEMKSRH) is disordered. Residues 127 to 163 (DKSDERAMREQEERRVRQEERRAEMKSRHDEIRKKYG) are a coiled coil. Y171 bears the Phosphotyrosine mark.

Interacts with PTTG1.

Its subcellular location is the cell membrane. It is found in the cytoplasm. The protein resides in the nucleus. Functionally, may facilitate PTTG1 nuclear translocation. This chain is Pituitary tumor-transforming gene 1 protein-interacting protein (Pttg1ip), found in Rattus norvegicus (Rat).